Reading from the N-terminus, the 84-residue chain is Small ribosomal subunit protein bS20 (84 aa).

This sequence belongs to the bacterial ribosomal protein bS20 family.

Functionally, binds directly to 16S ribosomal RNA. The protein is Small ribosomal subunit protein bS20 of Limosilactobacillus fermentum (strain NBRC 3956 / LMG 18251) (Lactobacillus fermentum).